A 279-amino-acid polypeptide reads, in one-letter code: Tryptophan synthase alpha chain (279 aa).

Active-site proton acceptor residues include glutamate 50 and aspartate 61.

The protein belongs to the TrpA family. In terms of assembly, tetramer of two alpha and two beta chains.

It catalyses the reaction (1S,2R)-1-C-(indol-3-yl)glycerol 3-phosphate + L-serine = D-glyceraldehyde 3-phosphate + L-tryptophan + H2O. Its pathway is amino-acid biosynthesis; L-tryptophan biosynthesis; L-tryptophan from chorismate: step 5/5. In terms of biological role, the alpha subunit is responsible for the aldol cleavage of indoleglycerol phosphate to indole and glyceraldehyde 3-phosphate. The protein is Tryptophan synthase alpha chain of Rhizobium meliloti (strain 1021) (Ensifer meliloti).